The chain runs to 223 residues: Deoxyribose-phosphate aldolase (223 aa).

Aspartate 92 acts as the Proton donor/acceptor in catalysis. The Schiff-base intermediate with acetaldehyde role is filled by lysine 154. Lysine 182 serves as the catalytic Proton donor/acceptor.

Belongs to the DeoC/FbaB aldolase family. DeoC type 1 subfamily.

Its subcellular location is the cytoplasm. The enzyme catalyses 2-deoxy-D-ribose 5-phosphate = D-glyceraldehyde 3-phosphate + acetaldehyde. Its pathway is carbohydrate degradation; 2-deoxy-D-ribose 1-phosphate degradation; D-glyceraldehyde 3-phosphate and acetaldehyde from 2-deoxy-alpha-D-ribose 1-phosphate: step 2/2. In terms of biological role, catalyzes a reversible aldol reaction between acetaldehyde and D-glyceraldehyde 3-phosphate to generate 2-deoxy-D-ribose 5-phosphate. This Haemophilus influenzae (strain PittEE) protein is Deoxyribose-phosphate aldolase.